A 379-amino-acid polypeptide reads, in one-letter code: uncharacterized protein (379 aa).

Residues 7–27 (VYIFAGIFLFIALIILIKIFF) form a helical membrane-spanning segment.

It localises to the membrane. This is an uncharacterized protein from Caenorhabditis elegans.